The primary structure comprises 295 residues: Indole-3-glycerol phosphate synthase (295 aa).

This sequence belongs to the TrpC family.

The catalysed reaction is 1-(2-carboxyphenylamino)-1-deoxy-D-ribulose 5-phosphate + H(+) = (1S,2R)-1-C-(indol-3-yl)glycerol 3-phosphate + CO2 + H2O. The protein operates within amino-acid biosynthesis; L-tryptophan biosynthesis; L-tryptophan from chorismate: step 4/5. The polypeptide is Indole-3-glycerol phosphate synthase (Prochlorococcus marinus (strain AS9601)).